The chain runs to 177 residues: Putative rubredoxin (177 aa).

The region spanning 1–38 is the Rubredoxin-like domain; that stretch reads MKICRICGYQIPEGEFNLLEDGWVCPRCGVGKEELQDS. Fe cation is bound by residues C4, C7, C25, and C28.

It belongs to the rubredoxin family. Requires Fe(3+) as cofactor.

This chain is Putative rubredoxin (rdxA), found in Methanothermobacter thermautotrophicus (strain ATCC 29096 / DSM 1053 / JCM 10044 / NBRC 100330 / Delta H) (Methanobacterium thermoautotrophicum).